We begin with the raw amino-acid sequence, 198 residues long: MSNLNNLTSKILNDAEEKKKYILAEAEAQKDKIISKKTNRAEADKEEIITKANIEAEVKKARIISNAKLSVRNDMLRAKQDVISKVFNEAIEKLQNLSNGDYKYYVISTLDSLELEGTEVIIINEKDKDIFSNEFLEALNKELESKGKKGSITLNMEGKFNGGFILDRNGIQINNTFEALINSLRGELEFEVNKVLFD.

It belongs to the V-ATPase E subunit family.

Functionally, produces ATP from ADP in the presence of a proton gradient across the membrane. The sequence is that of V-type ATP synthase subunit E from Clostridium perfringens (strain SM101 / Type A).